The following is a 189-amino-acid chain: uncharacterized protein (189 aa).

The next 4 membrane-spanning stretches (helical) occupy residues 49-69, 78-98, 102-122, and 124-144; these read LLGILKLITFPVLCAAGLFVF, LFHKSFQGCSGYVLATFLSLF, LTIVGIVSCITWAPGFIFPMI, and VSIAFATVETCFQIYTHLFPA. Residues 165 to 189 form a disordered region; sequence SSSAPDLNYPSLPTQSASPSQRFSA.

The protein belongs to the chlamydial CPn_0442/CT_006/TC_0274 family.

The protein resides in the cell membrane. This is an uncharacterized protein from Chlamydia trachomatis serovar D (strain ATCC VR-885 / DSM 19411 / UW-3/Cx).